The primary structure comprises 171 residues: Large ribosomal subunit protein bL9 (171 aa).

It belongs to the bacterial ribosomal protein bL9 family.

Functionally, binds to the 23S rRNA. This Rickettsia peacockii (strain Rustic) protein is Large ribosomal subunit protein bL9.